The sequence spans 300 residues: Geranylgeranyl diphosphate synthase (300 aa).

Residues Lys50, Arg53, and His82 each coordinate isopentenyl diphosphate. Residues Asp89 and Asp95 each contribute to the Mg(2+) site. A (2E,6E)-farnesyl diphosphate-binding site is contributed by Arg100. Position 101 (Arg101) interacts with isopentenyl diphosphate. Residues Lys186, Thr187, and Gln224 each coordinate (2E,6E)-farnesyl diphosphate.

The protein belongs to the FPP/GGPP synthase family. Mg(2+) is required as a cofactor.

The protein localises to the plastid. It is found in the cyanelle. It catalyses the reaction isopentenyl diphosphate + (2E,6E)-farnesyl diphosphate = (2E,6E,10E)-geranylgeranyl diphosphate + diphosphate. Its pathway is isoprenoid biosynthesis; geranylgeranyl diphosphate biosynthesis; geranylgeranyl diphosphate from farnesyl diphosphate and isopentenyl diphosphate: step 1/1. Functionally, catalyzes the condensation of farnesyl diphosphate (FPP) and isopentenyl diphosphate (IPP) to yield geranylgeranyl diphosphate (GGPP) needed for biosynthesis of carotenoids and diterpenes. The protein is Geranylgeranyl diphosphate synthase (crtE) of Cyanophora paradoxa.